Reading from the N-terminus, the 358-residue chain is Serine/threonine-protein phosphatase 2A activator 2 (358 aa).

This sequence belongs to the PTPA-type PPIase family.

The protein localises to the cytoplasm. It catalyses the reaction [protein]-peptidylproline (omega=180) = [protein]-peptidylproline (omega=0). PPIases accelerate the folding of proteins. It catalyzes the cis-trans isomerization of proline imidic peptide bonds in oligopeptides. Acts as a regulatory subunit for PP2A-like phosphatases modulating their activity or substrate specificity, probably by inducing a conformational change in the catalytic subunit, a direct target of the PPIase. Can reactivate inactive phosphatase PP2A-phosphatase methylesterase complexes (PP2Ai) in presence of ATP and Mg(2+) by dissociating the inactive form from the complex. The sequence is that of Serine/threonine-protein phosphatase 2A activator 2 (RRD2) from Candida albicans (strain SC5314 / ATCC MYA-2876) (Yeast).